Reading from the N-terminus, the 417-residue chain is MDRIIVEGGRRLTGTVEISGAKNAALPILASSLLTNGTCTYTNVPDLRDIQSIKELLTHLGAKIECQGTTVQVDASGVNNHEAPYELVRKMRASILVLCPLVARLGRARVSLPGGCAIGERPIDFHLKGLEAMGADIALEHGYVNASAPKLTGGSIYFDVPSVTGTENLLMAAALADGTTRIGNAACEPEVTALVDVLNQMGANITGAGTPEITIQGVPSLNPVSVSIIPDRIETGTFMVAAALTKGDITITNAEPSHLKGQLDKLAQTGARIEVNGKVIRVVGGDTIKSVDVKTLPYPGFPTDMQAQFMVLMSVASGLSIITETIFENRFIHVSELKRMGADITISGNTAMVAGAPKLSGAPVMASDLRASASLVLAGLVADGTTEISRVYHLDRGYENLEEKFERLGASIRRVTP.

Phosphoenolpyruvate is bound at residue 22–23 (KN). Arg-92 contacts UDP-N-acetyl-alpha-D-glucosamine. Catalysis depends on Cys-116, which acts as the Proton donor. Residue Cys-116 is modified to 2-(S-cysteinyl)pyruvic acid O-phosphothioketal. Positions 304 and 326 each coordinate UDP-N-acetyl-alpha-D-glucosamine.

Belongs to the EPSP synthase family. MurA subfamily.

The protein resides in the cytoplasm. The enzyme catalyses phosphoenolpyruvate + UDP-N-acetyl-alpha-D-glucosamine = UDP-N-acetyl-3-O-(1-carboxyvinyl)-alpha-D-glucosamine + phosphate. It participates in cell wall biogenesis; peptidoglycan biosynthesis. Its function is as follows. Cell wall formation. Adds enolpyruvyl to UDP-N-acetylglucosamine. This chain is UDP-N-acetylglucosamine 1-carboxyvinyltransferase, found in Desulfosudis oleivorans (strain DSM 6200 / JCM 39069 / Hxd3) (Desulfococcus oleovorans).